The sequence spans 245 residues: 14-3-3 protein theta (245 aa).

Residue Met-1 is modified to N-acetylmethionine. Lys-3 carries the N6-acetyllysine modification. Residue Lys-49 is modified to N6-acetyllysine; alternate. Lys-49 is covalently cross-linked (Glycyl lysine isopeptide (Lys-Gly) (interchain with G-Cter in SUMO2); alternate). The residue at position 68 (Lys-68) is an N6-acetyllysine. Tyr-82 bears the 3'-nitrotyrosine mark. Ser-92 bears the Phosphoserine mark. Residue Tyr-104 is modified to 3'-nitrotyrosine. Residue Lys-115 is modified to N6-acetyllysine. Phosphoserine; by CK1 is present on Ser-232.

The protein belongs to the 14-3-3 family. Homodimer. Interacts with CDK16. Interacts with RGS7 (phosphorylated form). Interacts with SSH1. Interacts with CDKN1B ('Thr-198' phosphorylated form); the interaction translocates CDKN1B to the cytoplasm. Interacts with GAB2. Interacts with the 'Ser-241' phosphorylated form of PDPK1. Interacts with the 'Thr-369' phosphorylated form of DAPK2. Interacts with PI4KB, TBC1D22A and TBC1D22B. Interacts with SLITRK1. Interacts with RIPOR2. Interacts with INAVA; the interaction increases upon PRR (pattern recognition receptor) stimulation and is required for cellular signaling pathway activation and cytokine secretion. Interacts with MARK2, MARK3 and MARK4. Interacts with MEFV.

It is found in the cytoplasm. Its function is as follows. Adapter protein implicated in the regulation of a large spectrum of both general and specialized signaling pathways. Binds to a large number of partners, usually by recognition of a phosphoserine or phosphothreonine motif. Binding generally results in the modulation of the activity of the binding partner. Negatively regulates the kinase activity of PDPK1. The sequence is that of 14-3-3 protein theta (YWHAQ) from Bos taurus (Bovine).